The chain runs to 508 residues: ATP synthase subunit alpha, chloroplastic (508 aa).

An ATP-binding site is contributed by 172 to 179 (GDRQTGKT).

The protein belongs to the ATPase alpha/beta chains family. In terms of assembly, F-type ATPases have 2 components, CF(1) - the catalytic core - and CF(0) - the membrane proton channel. CF(1) has five subunits: alpha(3), beta(3), gamma(1), delta(1), epsilon(1). CF(0) has four main subunits: a, b, b' and c.

The protein localises to the plastid. It is found in the chloroplast thylakoid membrane. It catalyses the reaction ATP + H2O + 4 H(+)(in) = ADP + phosphate + 5 H(+)(out). Its function is as follows. Produces ATP from ADP in the presence of a proton gradient across the membrane. The alpha chain is a regulatory subunit. This chain is ATP synthase subunit alpha, chloroplastic, found in Psilotum nudum (Whisk fern).